A 283-amino-acid polypeptide reads, in one-letter code: Putative transposase InsK for insertion sequence element IS150 (283 aa).

One can recognise an Integrase catalytic domain in the interval 117 to 279; it reads KATRPNEKWV…TPIEYRNQTY (163 aa).

It belongs to the transposase IS3/IS150/IS904 family.

Involved in the transposition of the insertion sequence IS150. This chain is Putative transposase InsK for insertion sequence element IS150 (insK), found in Escherichia coli (strain K12).